The sequence spans 291 residues: Methionine aminopeptidase (291 aa).

His-118 contacts substrate. A divalent metal cation is bound by residues Asp-135, Asp-146, and His-209. His-216 provides a ligand contact to substrate. The a divalent metal cation site is built by Glu-241 and Glu-273.

The protein belongs to the peptidase M24A family. Methionine aminopeptidase type 1 subfamily. As to quaternary structure, monomer. Co(2+) is required as a cofactor. It depends on Zn(2+) as a cofactor. Mn(2+) serves as cofactor. The cofactor is Fe(2+).

It catalyses the reaction Release of N-terminal amino acids, preferentially methionine, from peptides and arylamides.. Its function is as follows. Removes the N-terminal methionine from nascent proteins. The N-terminal methionine is often cleaved when the second residue in the primary sequence is small and uncharged (Met-Ala-, Cys, Gly, Pro, Ser, Thr, or Val). Requires deformylation of the N(alpha)-formylated initiator methionine before it can be hydrolyzed. This chain is Methionine aminopeptidase, found in Chlamydia pneumoniae (Chlamydophila pneumoniae).